A 633-amino-acid polypeptide reads, in one-letter code: Rab11 family-interacting protein 4 (633 aa).

2 EF-hand domains span residues 17–52 and 50–85; these read LFLQ…FAQG and AQGD…MKGC. Residues aspartate 30, aspartate 32, aspartate 34, aspartate 63, asparagine 65, arginine 69, and aspartate 74 each coordinate Ca(2+). Disordered stretches follow at residues 152–182 and 218–257; these read SDLD…LGSL and GEGE…QTPR. The span at 238-254 shows a compositional bias: polar residues; it reads TNALSDLGSSVPSSAGQ. Residues 410–613 adopt a coiled-coil conformation; the sequence is AREKGTEIVL…EEINYRLRQY (204 aa). Residues 570 to 632 form the FIP-RBD domain; it reads EAKSLFSTQT…DHNPSILEIK (63 aa).

Homodimer. Forms a complex with Rab11 (rab11a or rab11b) and arf6.

It is found in the recycling endosome membrane. The protein resides in the cleavage furrow. It localises to the midbody. Its subcellular location is the cytoplasmic vesicle. Its function is as follows. Acts as a regulator of endocytic traffic by participating in membrane delivery. Required for the abscission step in cytokinesis, possibly by acting as an 'address tag' delivering recycling endosome membranes to the cleavage furrow during late cytokinesis. This Xenopus tropicalis (Western clawed frog) protein is Rab11 family-interacting protein 4 (rab11fip4).